Consider the following 350-residue polypeptide: Casein kinase II subunit alpha' (350 aa).

Y13 carries the post-translational modification Phosphotyrosine. Phosphoserine occurs at positions 18 and 21. The region spanning 40–325 (YQLVRKLGRG…AKEAMEHPYF (286 aa)) is the Protein kinase domain. Residues 46 to 54 (LGRGKYSEV) and K69 each bind ATP. K97 carries the post-translational modification N6-acetyllysine. D157 acts as the Proton acceptor in catalysis. S288 carries the post-translational modification Phosphoserine.

Belongs to the protein kinase superfamily. Ser/Thr protein kinase family. CK2 subfamily. In terms of assembly, heterotetramer composed of two catalytic subunits (alpha chain and/or alpha' chain) and two regulatory subunits (beta chains). The tetramer can exist as a combination of 2 alpha/2 beta, 2 alpha'/2 beta or 1 alpha/1 alpha'/2 beta subunits. Also part of a CK2-SPT16-SSRP1 complex composed of SSRP1, SUPT16H, CSNK2A1, CSNK2A2 and CSNK2B, which forms following UV irradiation. Interacts with RNPS1. Interacts with CSNK2A2IP (via C-terminus). Interacts with SIRT6; preventing CSNK2A2 localization to the nucleus. Interacts with HIRIP3. In terms of tissue distribution, highly expressed in brain, testis and mature epididymal spermatozoa. Weakly expressed in kidney, liver, lung, spleen and thymus (at protein level).

The protein resides in the nucleus. It is found in the cytoplasm. The enzyme catalyses L-seryl-[protein] + ATP = O-phospho-L-seryl-[protein] + ADP + H(+). It catalyses the reaction L-threonyl-[protein] + ATP = O-phospho-L-threonyl-[protein] + ADP + H(+). Constitutively active protein kinase whose activity is not directly affected by phosphorylation. Seems to be regulated by level of expression and localization. Catalytic subunit of a constitutively active serine/threonine-protein kinase complex that phosphorylates a large number of substrates containing acidic residues C-terminal to the phosphorylated serine or threonine. Regulates numerous cellular processes, such as cell cycle progression, apoptosis and transcription, as well as viral infection. May act as a regulatory node which integrates and coordinates numerous signals leading to an appropriate cellular response. During mitosis, functions as a component of the p53/TP53-dependent spindle assembly checkpoint (SAC) that maintains cyclin-B-CDK1 activity and G2 arrest in response to spindle damage. Also required for p53/TP53-mediated apoptosis, phosphorylating 'Ser-392' of p53/TP53 following UV irradiation. Phosphorylates a number of DNA repair proteins in response to DNA damage, such as MDC1, RAD9A, RAD51 and HTATSF1, promoting their recruitment to DNA damage sites. Can also negatively regulate apoptosis. Phosphorylates the caspases CASP9 and CASP2 and the apoptotic regulator NOL3. Phosphorylation protects CASP9 from cleavage and activation by CASP8, and inhibits the dimerization of CASP2 and activation of CASP8. Regulates transcription by direct phosphorylation of RNA polymerases I, II, III and IV. Also phosphorylates and regulates numerous transcription factors including NF-kappa-B, STAT1, CREB1, IRF1, IRF2, ATF1, SRF, MAX, JUN, FOS, MYC and MYB. Phosphorylates Hsp90 and its co-chaperones FKBP4 and CDC37, which is essential for chaperone function. Regulates Wnt signaling by phosphorylating CTNNB1 and the transcription factor LEF1. Acts as an ectokinase that phosphorylates several extracellular proteins. May phosphorylate histone H2A on 'Ser-1'. This chain is Casein kinase II subunit alpha' (Csnk2a2), found in Mus musculus (Mouse).